Reading from the N-terminus, the 558-residue chain is Membrane protein insertase YidC (558 aa).

5 consecutive transmembrane segments (helical) span residues 6-26, 359-379, 434-454, 480-500, and 513-533; these read SFFIIVFLIVSFILWKIWDDE, FIHTYTIDNWGISIILITVII, LGGCLPLLIQMPIFLALYYML, ILPIIMGITMFFIQKLSPTTI, and LVIFTIFFLWFPSGLVLYYII.

It belongs to the OXA1/ALB3/YidC family. Type 1 subfamily. Interacts with the Sec translocase complex via SecD. Specifically interacts with transmembrane segments of nascent integral membrane proteins during membrane integration.

The protein localises to the cell inner membrane. Required for the insertion and/or proper folding and/or complex formation of integral membrane proteins into the membrane. Involved in integration of membrane proteins that insert both dependently and independently of the Sec translocase complex, as well as at least some lipoproteins. Aids folding of multispanning membrane proteins. In Blochmanniella floridana, this protein is Membrane protein insertase YidC.